We begin with the raw amino-acid sequence, 403 residues long: Probable N-acetyltransferase HLS1 (403 aa).

In terms of domain architecture, N-acetyltransferase spans 2-177; the sequence is TVVREYDPTR…VNPVYAHRVN (176 aa).

This sequence belongs to the acetyltransferase family.

In terms of biological role, ethylene-responsive N-acetyltransferase required for differential cell elongation in the hypocotyl. Regulates apical hook formation of dark-grown seedlings. May control differential cell growth by regulating auxin activity. May be involved in negative feedback regulation of auxin homeostasis through the control of GH3-like genes. Modulates de novo shoot organogenesis. In Arabidopsis thaliana (Mouse-ear cress), this protein is Probable N-acetyltransferase HLS1 (HLS1).